The chain runs to 100 residues: Urease subunit gamma (100 aa).

This sequence belongs to the urease gamma subunit family. In terms of assembly, heterotrimer of UreA (gamma), UreB (beta) and UreC (alpha) subunits. Three heterotrimers associate to form the active enzyme.

The protein localises to the cytoplasm. It carries out the reaction urea + 2 H2O + H(+) = hydrogencarbonate + 2 NH4(+). It participates in nitrogen metabolism; urea degradation; CO(2) and NH(3) from urea (urease route): step 1/1. The sequence is that of Urease subunit gamma from Burkholderia mallei (strain NCTC 10247).